A 167-amino-acid polypeptide reads, in one-letter code: Elafin (167 aa).

Residues 1-21 (MRSRSFLVLVVVFLICGTLVA) form the signal peptide. Residues 22–70 (QAAGRIRRPKGKGTKKILALVKGQGPVRGKDQVKGQGPVKGQDLGKSQD) constitute a propeptide that is removed on maturation. A run of 12 repeats spans residues 44-49 (GQGPVR), 50-55 (GKDQVK), 56-61 (GQGPVK), 62-67 (GQDLGK), 68-73 (SQDPVK), 74-79 (AQLPDK), 80-85 (GQDLGK), 86-91 (GEDSVK), 92-97 (GQDPFK), 98-103 (AQLPDK), 104-109 (LQDPVK), and 110-115 (AQPAIK). Positions 44-115 (GQGPVRGKDQ…DPVKAQPAIK (72 aa)) are 12 X 6 AA tandem repeats of [GSAL]-[QEK]-[DGLP]-[APSLQ]-[VGDFI]-[KR]. The tract at residues 46-104 (GPVRGKDQVKGQGPVKGQDLGKSQDPVKAQLPDKGQDLGKGEDSVKGQDPFKAQLPDKL) is disordered. The 2 X tandem repeats of SVP-1 like motif stretch occupies residues 78 to 126 (DKGQDLGKGEDSVKGQDPFKAQLPDKLQDPVKAQPAIKRLILLTKPGSC). A compositionally biased stretch (basic and acidic residues) spans 79 to 91 (KGQDLGKGEDSVK). 2 SVP-1 clotting repeats span residues 80 to 101 (GQDL…AQLP) and 104 to 126 (LQDP…PGSC). Residues 119 to 167 (LLTKPGSCPRILIRCLMVNPPNRCLSDAQCPGLKKCCEGFCGKACMDPK) enclose the WAP domain. Disulfide bonds link Cys126–Cys155, Cys133–Cys159, Cys142–Cys154, and Cys148–Cys163.

As to expression, trachea and large intestine.

In terms of biological role, neutrophil and pancreatic elastase-specific inhibitor of skin. It may prevent elastase-mediated tissue proteolysis. The chain is Elafin from Sus scrofa (Pig).